Reading from the N-terminus, the 505-residue chain is COMPASS component BRE2 (505 aa).

Residues 70-295 (SANPFFTILG…LKQETTNKEF (226 aa)) enclose the B30.2/SPRY domain. At serine 227 the chain carries Phosphoserine. Residues 271 to 290 (EPWREDAENGPSRKKLKQET) are disordered. Lysine 318 lines the DNA pocket. Positions 398–420 (RDESNDKNTTSAKKKKQQQKKKK) are disordered. Over residues 409-420 (AKKKKQQQKKKK) the composition is skewed to basic residues.

Belongs to the cclA family. In terms of assembly, component of the Set1C/COMPASS complex which consists of SET1(2), BRE2(2), SPP1(2), SDC1(1), SHG1(1), SWD1(1), SWD2(1), and SWD3(1). Interacts directly with SDC1.

The protein resides in the nucleus. The protein localises to the chromosome. It localises to the telomere. Its function is as follows. Component of the Set1C/COMPASS complex that specifically mono-, di- and trimethylates histone H3 to form H3K4me1/2/3, which subsequently plays a role in telomere length maintenance and transcription elongation regulation. COMPASS recognizes ubiquitinated H2B on one face of the nucleosome which stimulates the methylation of H3 on the opposing face. In Saccharomyces cerevisiae (strain ATCC 204508 / S288c) (Baker's yeast), this protein is COMPASS component BRE2.